The chain runs to 319 residues: tRNA pseudouridine synthase B (319 aa).

The Nucleophile role is filled by aspartate 47.

Belongs to the pseudouridine synthase TruB family. Type 1 subfamily.

It catalyses the reaction uridine(55) in tRNA = pseudouridine(55) in tRNA. Functionally, responsible for synthesis of pseudouridine from uracil-55 in the psi GC loop of transfer RNAs. The sequence is that of tRNA pseudouridine synthase B from Pseudoalteromonas translucida (strain TAC 125).